The sequence spans 255 residues: MCNVHAQQGSAQEAPPPGELLLIDKPLDWTSFDVVAKVRNTYRKCGSKRKVGHCGTLDPKATGLLIVATGRKTKEISQLEQLDKVYDGVIKLGAITASHDTETPEEQLCDVAHLSEAELHAVAATFIGNRLQQPPMHSAAWHNGRRLYEHARKGEVIRERKAREIVVHRFTITNVALPFVSFELHVSKGAYIRVIADEFGAALGVGGYLAALRRTAIGEWQLTNALSVNDTIEQIHNNASKGALCGTASTIHPAT.

Aspartate 58 functions as the Nucleophile in the catalytic mechanism.

The protein belongs to the pseudouridine synthase TruB family. Type 1 subfamily.

The enzyme catalyses uridine(55) in tRNA = pseudouridine(55) in tRNA. Its function is as follows. Responsible for synthesis of pseudouridine from uracil-55 in the psi GC loop of transfer RNAs. This chain is tRNA pseudouridine synthase B, found in Chlorobium chlorochromatii (strain CaD3).